Here is a 688-residue protein sequence, read N- to C-terminus: PTS system glucoside-specific EIICBA component (688 aa).

The PTS EIIC type-1 domain occupies 3–427; the sequence is KKLFGQLQRI…FKLKTPGRED (425 aa). 10 helical membrane-spanning segments follow: residues 12 to 32, 81 to 101, 137 to 157, 182 to 202, 223 to 243, 284 to 304, 315 to 335, 340 to 360, 364 to 384, and 395 to 415; these read IGKALMLPVAILPAAGILLAF, LGLAGGDGVAALAALVGYLIM, LVLGIPTLQTGVFGGIIMGAL, FVPIVTSVVAIATGVLLSFAW, LTTFIFGIIERSLIPFGLHHI, AFTTGKYPFMMFGLPAAAFAI, VVGGLMLSAGLTAFLTGITEP, FLFVAPVLYGIHVLLAGTSFL, LLGVKIGMTFSGGFIDYILYG, and LVIPVGIVYAIVYYFLFDFAI. In terms of domain architecture, PTS EIIB type-1 spans 438–519; it reads AKLPFDVLDA…AKIMSGEITK (82 aa). Residue Cys-460 is the Phosphocysteine intermediate; for EIIB activity of the active site. A PTS EIIA type-1 domain is found at 560 to 664; that stretch reads DQVFAGKMMG…SIVTPMIITN (105 aa). Catalysis depends on His-612, which acts as the Tele-phosphohistidine intermediate; for EIIA activity.

Its subcellular location is the cell membrane. In terms of biological role, the phosphoenolpyruvate-dependent sugar phosphotransferase system (sugar PTS), a major carbohydrate active -transport system, catalyzes the phosphorylation of incoming sugar substrates concomitantly with their translocation across the cell membrane. This system is involved in alpha- and beta-glucoside transport. In Staphylococcus aureus (strain Mu3 / ATCC 700698), this protein is PTS system glucoside-specific EIICBA component (glcB).